The following is a 283-amino-acid chain: Serine protease 57 (283 aa).

Positions 1–31 (MGLGLRGWGRPLLTVATALMLPVKPPAGSWG) are cleaved as a signal peptide. The Peptidase S1 domain maps to 34-263 (IIGGHEVTPH…FVAWIWDVVR (230 aa)). An intrachain disulfide couples cysteine 59 to cysteine 75. Residues histidine 74 and aspartate 122 each act as charge relay system in the active site. N-linked (GlcNAc...) asparagine glycosylation is found at asparagine 129 and asparagine 189. Disulfide bonds link cysteine 157–cysteine 224, cysteine 188–cysteine 202, and cysteine 214–cysteine 239. Residue serine 218 is the Charge relay system of the active site.

This sequence belongs to the peptidase S1 family. In terms of processing, after cleavage of the signal peptide, the N-terminus is probably further processed by CTSC. Processing by CTSC is probably required for accumulation in cytoplasmic granules; in the absence of CTSC the protein does not accumulate. N-glycosylated. As to expression, detected in peripheral blood neutrophil granulocytes, but not in other types of leukocytes. Detected in neutrophils and neutrophil precursors in bone marrow (at protein level). Detected in myeloblasts and promyelocytes in bone marrow.

It is found in the cytoplasmic granule lumen. It localises to the secreted. Its activity is regulated as follows. Inhibited by SERPINA1, SERPINC1 and SERPING1. Functionally, serine protease that cleaves preferentially after Arg residues. Can also cleave after citrulline (deimidated arginine) and methylarginine residues. This Homo sapiens (Human) protein is Serine protease 57 (PRSS57).